The primary structure comprises 152 residues: MKKLQNVFAAIKTGLLAKATSVTVIGSKRVFEILSRFENEGLIRGFQIIDISKNKVSIYLKYKQDMTSLLSKIKVVSVNKEKLYIKGKLLKKLNTGVNMYFVESKFGLQTLPQLKIRNKRLYAPLGGEIKYIVEINKVNPKIQELIKKKHEI.

The protein belongs to the universal ribosomal protein uS8 family.

It localises to the mitochondrion. The sequence is that of Small ribosomal subunit protein uS8m (mrps8) from Dictyostelium discoideum (Social amoeba).